Reading from the N-terminus, the 387-residue chain is Glutamate N-acetyltransferase (387 aa).

Thr140, Lys162, Thr173, Glu257, Asn382, and Thr387 together coordinate substrate. Catalysis depends on Thr173, which acts as the Nucleophile.

It belongs to the ArgJ family. Heterotetramer of two alpha and two beta chains.

The protein resides in the cytoplasm. It carries out the reaction N(2)-acetyl-L-ornithine + L-glutamate = N-acetyl-L-glutamate + L-ornithine. Its pathway is amino-acid biosynthesis; L-arginine biosynthesis; L-ornithine and N-acetyl-L-glutamate from L-glutamate and N(2)-acetyl-L-ornithine (cyclic): step 1/1. Functionally, catalyzes the transfer of the acetyl group from N(2)-acetylornithine to glutamate, forming N-acetylglutamate and L-ornithine. This is Glutamate N-acetyltransferase from Methanopyrus kandleri (strain AV19 / DSM 6324 / JCM 9639 / NBRC 100938).